A 500-amino-acid chain; its full sequence is Probable transcription factor FPSE_09189 (500 aa).

Disordered stretches follow at residues 161-197 and 457-500; these read MVRH…PSLA and IRTG…TQLE. Basic and acidic residues predominate over residues 459–474; the sequence is TGHEDSSRDGGRENKA. A compositionally biased stretch (polar residues) spans 475 to 484; sequence MNRNRSTGNS.

It localises to the nucleus. Functionally, the two putative transcription factors FPSE_09188 and FPSE_09189 could be responsible for orchestrating expression of the W493 A and B biosynthesis cluster genes. W493 A and B consist of six amino acid residues D-allo-thr, L-Ala, D-Ala, L-Gln, D-Tyr, and L-Val/L-Ile linked to a 3-hydroxy-4-methyltetradecanoic acid polyketide chain. This Fusarium pseudograminearum (strain CS3096) (Wheat and barley crown-rot fungus) protein is Probable transcription factor FPSE_09189.